Here is a 495-residue protein sequence, read N- to C-terminus: MCFNNIETGDEVETERQVFGSSEEDEFRVEDTARNTNNVQISQQQQQPLAHVVKWERYLPVRSLKVLLVENDDSTRHIVTALLKNCSYEVTAVPDVLEAWRILEDEKSCIDLVLTEVDMPVHSGTGLLSKIMSHKTLKNIPVIMMSSHDSMVLVFKCLSNGAVDFLVKPIRKNELKNLWQHVWRRCHSSSGSGSESGIHDKKSVKPESTQGSENDASISDEHRNESGSSGGLSNQDGGSDNGSGTQSSWTKRASDTKSTSPSNQFPDAPNKKGTYENGCAHVNRLKEAEDQKEQIGTGSQTGMSMSKKAEEPGDLEKNAKYSVQALERNNDDTLNRSSGNSQVESKAPSSNREDLQSLEQTLKKTREDRDYKVGDRSVLRHSNLSAFSKYNNGATSAKKAPEENVESCSPHDSPIAKLLGSSSSSDNPLKQQSSGSDRWAQREAALMKFRLKRKERCFEKKVRYHSRKKLAEQRPHVKGQFIRKRDDHKSGSEDN.

A Response regulatory domain is found at 65–183; it reads KVLLVENDDS…ELKNLWQHVW (119 aa). 2 disordered regions span residues 188 to 441 and 465 to 495; these read SSSG…RWAQ and HSRKKLAEQRPHVKGQFIRKRDDHKSGSEDN. Residues 206–217 are compositionally biased toward polar residues; it reads PESTQGSENDAS. The span at 231–248 shows a compositional bias: low complexity; that stretch reads GLSNQDGGSDNGSGTQSS. The segment covering 256–265 has biased composition (polar residues); that stretch reads TKSTSPSNQF. Over residues 284 to 293 the composition is skewed to basic and acidic residues; it reads RLKEAEDQKE. Residues 294–304 are compositionally biased toward polar residues; that stretch reads QIGTGSQTGMS. Positions 307–319 are enriched in basic and acidic residues; sequence KKAEEPGDLEKNA. The segment covering 335-350 has biased composition (polar residues); the sequence is NRSSGNSQVESKAPSS. Residues 349 to 372 are a coiled coil; the sequence is SSNREDLQSLEQTLKKTREDRDYK. Positions 351–378 are enriched in basic and acidic residues; it reads NREDLQSLEQTLKKTREDRDYKVGDRSV. Composition is skewed to polar residues over residues 380 to 395 and 420 to 436; these read RHSNLSAFSKYNNGAT and GSSSSSDNPLKQQSSGS. Residues 442–484 enclose the CCT domain; it reads REAALMKFRLKRKERCFEKKVRYHSRKKLAEQRPHVKGQFIRK. Residues 483–495 are compositionally biased toward basic and acidic residues; that stretch reads RKRDDHKSGSEDN.

It belongs to the ARR-like family. Interacts with APRR1/TOC1 (via N-terminus). Phosphorylated by WNK1; during the night. Phosphorylation is required for optimal interaction with APRR1/TOC1.

The protein localises to the nucleus. In terms of biological role, controls photoperiodic flowering response. Component of the circadian clock. Controls the degradation of APRR1/TOC1 by the SCF(ZTL) complex. Expression of several members of the ARR-like family is controlled by circadian rhythm. The particular coordinated sequential expression of APRR9, APRR7, APRR5, APRR3 and APPR1 result to circadian waves that may be at the basis of the endogenous circadian clock. In Arabidopsis thaliana (Mouse-ear cress), this protein is Two-component response regulator-like APRR3 (APRR3).